The primary structure comprises 305 residues: DNA-directed RNA polymerase 35 kDa subunit (305 aa).

Belongs to the poxviridae DNA-directed RNA polymerase 35 kDa subunit family. The DNA-dependent RNA polymerase used for intermediate and late genes expression consists of eight subunits 147 kDa, 133 kDa, 35 kDa, 30 kDa, 22 kDa, 19 kDa, 18 kDa and 7 kDa totalling more than 500 kDa in mass. The same holoenzyme, with the addition of the transcription-specificity factor RAP94, is used for early gene expression.

The protein localises to the virion. It catalyses the reaction RNA(n) + a ribonucleoside 5'-triphosphate = RNA(n+1) + diphosphate. Its function is as follows. Part of the DNA-dependent RNA polymerase which catalyzes the transcription of viral DNA into RNA using the four ribonucleoside triphosphates as substrates. Responsible for the transcription of early, intermediate and late genes. DNA-dependent RNA polymerase associates with the early transcription factor (ETF), itself composed of D6 and A7, thereby allowing the early genes transcription. Late transcription, and probably also intermediate transcription, require newly synthesized RNA polymerase. The polypeptide is DNA-directed RNA polymerase 35 kDa subunit (OPG156) (Variola virus (isolate Human/India/Ind3/1967) (VARV)).